Reading from the N-terminus, the 439-residue chain is L-tryptophan decarboxylase (439 aa).

It belongs to the phosphatidylserine decarboxylase family.

It carries out the reaction L-tryptophan + H(+) = tryptamine + CO2. The protein operates within secondary metabolite biosynthesis. Its function is as follows. L-tryptophan decarboxylase; part of the gene cluster that mediates the biosynthesis of psilocybin, a psychotropic tryptamine-derived natural product. The first step in the pathway is the decarboxylation of L-tryptophan to tryptamine by the decarboxylase psiD. 4-hydroxy-L-tryptophan is accepted as substrate by psiD as well. The cytochrome P450 monooxygenase psiH then converts tryptamine to 4-hydroxytryptamine. The kinase psiK catalyzes the 4-O-phosphorylation step by converting 4-hydroxytryptamine into norbaeocystin. The methyltransferase psiM then catalyzes iterative methyl transfer to the amino group of norbaeocystin to yield psilocybin via a monomethylated intermediate, baeocystin. 4-hydroxy-6-methyl-l-tryptophancan also be converted the decarboxylase PsiD, kinase PsiK, and methyltransferase PsiM into respectively 6-methyl-norbaeocystin, 6-methylbaeocystin, and 6-methylpsilocybin. This is L-tryptophan decarboxylase from Psilocybe cubensis (Psychedelic mushroom).